The following is a 409-amino-acid chain: Casein kinase I isoform delta-B (409 aa).

Residues 9 to 277 form the Protein kinase domain; it reads YRLGRKIGSG…YLRQLFRNLF (269 aa). ATP contacts are provided by residues 15–23 and K38; that span reads IGSGSFGDI. Residue D128 is the Proton acceptor of the active site. Residues 300–315 are compositionally biased toward basic and acidic residues; it reads TAEEADRERRERDERM. The tract at residues 300-409 is disordered; sequence TAEEADRERR…NSIPFDHHGK (110 aa). An autoinhibitory region spans residues 317–341; sequence HSRNPAARGIPAASGRPRPTQDGAP. Polar residues-rich tracts occupy residues 346–358 and 380–402; these read TPTSHTANTSSPR and NVSSSDLTGRQDTSRMSTSQNSI.

Belongs to the protein kinase superfamily. As to quaternary structure, monomer. Interacts with per1 and per2. Component of the circadian core oscillator. In terms of processing, autophosphorylated on serine and threonine residues.

Its subcellular location is the cytoplasm. It localises to the nucleus. It carries out the reaction L-seryl-[protein] + ATP = O-phospho-L-seryl-[protein] + ADP + H(+). The catalysed reaction is L-threonyl-[protein] + ATP = O-phospho-L-threonyl-[protein] + ADP + H(+). Exhibits substrate-dependent heparin activation. Functionally, casein kinases are operationally defined by their preferential utilization of acidic proteins such as caseins as substrates. Central component of the circadian clock. May act as a negative regulator of circadian rhythmicity by phosphorylating per1 and per2, which may lead to their degradation. Participates in wnt signaling. The chain is Casein kinase I isoform delta-B (csnk1db) from Danio rerio (Zebrafish).